We begin with the raw amino-acid sequence, 1199 residues long: DNA-directed RNA polymerase subunit beta (1199 aa).

The interval 1175–1199 (EEKKAHEAAAQATDGKSANSTDDKK) is disordered. Residues 1188 to 1199 (DGKSANSTDDKK) are compositionally biased toward polar residues.

Belongs to the RNA polymerase beta chain family. As to quaternary structure, the RNAP catalytic core consists of 2 alpha, 1 beta, 1 beta' and 1 omega subunit. When a sigma factor is associated with the core the holoenzyme is formed, which can initiate transcription.

It carries out the reaction RNA(n) + a ribonucleoside 5'-triphosphate = RNA(n+1) + diphosphate. DNA-dependent RNA polymerase catalyzes the transcription of DNA into RNA using the four ribonucleoside triphosphates as substrates. This is DNA-directed RNA polymerase subunit beta from Lacticaseibacillus casei (strain BL23) (Lactobacillus casei).